A 156-amino-acid polypeptide reads, in one-letter code: Ribosomal RNA large subunit methyltransferase H (156 aa).

S-adenosyl-L-methionine-binding positions include leucine 73, glycine 104, and 123–128 (ISSMTL).

It belongs to the RNA methyltransferase RlmH family. In terms of assembly, homodimer.

The protein localises to the cytoplasm. The enzyme catalyses pseudouridine(1915) in 23S rRNA + S-adenosyl-L-methionine = N(3)-methylpseudouridine(1915) in 23S rRNA + S-adenosyl-L-homocysteine + H(+). Specifically methylates the pseudouridine at position 1915 (m3Psi1915) in 23S rRNA. The sequence is that of Ribosomal RNA large subunit methyltransferase H from Burkholderia vietnamiensis (strain G4 / LMG 22486) (Burkholderia cepacia (strain R1808)).